The following is a 350-amino-acid chain: ATPase GET3 (350 aa).

Position 26–33 (26–33 (KGGVGKTT)) interacts with ATP. Asp-57 is a catalytic residue. Positions 241 and 268 each coordinate ATP. 2 residues coordinate Zn(2+): Cys-281 and Cys-284.

This sequence belongs to the arsA ATPase family. As to quaternary structure, homodimer. Component of the Golgi to ER traffic (GET) complex, which is composed of GET1, GET2 and GET3. Within the complex, GET1 and GET2 form a heterotetramer which is stabilized by phosphatidylinositol binding and which binds to the GET3 homodimer. Interacts with the chloride channel protein GEF1.

It is found in the cytoplasm. It localises to the endoplasmic reticulum. The protein resides in the golgi apparatus. Its function is as follows. ATPase required for the post-translational delivery of tail-anchored (TA) proteins to the endoplasmic reticulum. Recognizes and selectively binds the transmembrane domain of TA proteins in the cytosol. This complex then targets to the endoplasmic reticulum by membrane-bound receptors GET1 and GET2, where the tail-anchored protein is released for insertion. This process is regulated by ATP binding and hydrolysis. ATP binding drives the homodimer towards the closed dimer state, facilitating recognition of newly synthesized TA membrane proteins. ATP hydrolysis is required for insertion. Subsequently, the homodimer reverts towards the open dimer state, lowering its affinity for the GET1-GET2 receptor, and returning it to the cytosol to initiate a new round of targeting. Cooperates with the HDEL receptor ERD2 to mediate the ATP-dependent retrieval of resident ER proteins that contain a C-terminal H-D-E-L retention signal from the Golgi to the ER. Involved in low-level resistance to the oxyanions arsenite and arsenate, and in heat tolerance. This is ATPase GET3 from Candida glabrata (strain ATCC 2001 / BCRC 20586 / JCM 3761 / NBRC 0622 / NRRL Y-65 / CBS 138) (Yeast).